We begin with the raw amino-acid sequence, 305 residues long: UDP-3-O-acyl-N-acetylglucosamine deacetylase (305 aa).

His78, His237, and Asp241 together coordinate Zn(2+). Residue His264 is the Proton donor of the active site.

It belongs to the LpxC family. Requires Zn(2+) as cofactor.

It catalyses the reaction a UDP-3-O-[(3R)-3-hydroxyacyl]-N-acetyl-alpha-D-glucosamine + H2O = a UDP-3-O-[(3R)-3-hydroxyacyl]-alpha-D-glucosamine + acetate. It participates in glycolipid biosynthesis; lipid IV(A) biosynthesis; lipid IV(A) from (3R)-3-hydroxytetradecanoyl-[acyl-carrier-protein] and UDP-N-acetyl-alpha-D-glucosamine: step 2/6. Its function is as follows. Catalyzes the hydrolysis of UDP-3-O-myristoyl-N-acetylglucosamine to form UDP-3-O-myristoylglucosamine and acetate, the committed step in lipid A biosynthesis. This is UDP-3-O-acyl-N-acetylglucosamine deacetylase from Cupriavidus necator (strain ATCC 17699 / DSM 428 / KCTC 22496 / NCIMB 10442 / H16 / Stanier 337) (Ralstonia eutropha).